The primary structure comprises 207 residues: Cytochrome c oxidase subunit 3 (207 aa).

A run of 5 helical transmembrane segments spans residues 30-50 (FWLF…TFLA), 67-87 (VTLV…SVYA), 101-121 (LWLG…IYEF), 144-164 (LVGT…TLMI), and 186-206 (WHFI…MGMV).

The protein belongs to the cytochrome c oxidase subunit 3 family.

Its subcellular location is the cell membrane. The enzyme catalyses 4 Fe(II)-[cytochrome c] + O2 + 8 H(+)(in) = 4 Fe(III)-[cytochrome c] + 2 H2O + 4 H(+)(out). The polypeptide is Cytochrome c oxidase subunit 3 (ctaE) (Bacillus subtilis (strain 168)).